Consider the following 837-residue polypeptide: Tuftelin-interacting protein 11 (837 aa).

2 stretches are compositionally biased toward basic and acidic residues: residues 1-13 (MSLS…GEGR) and 53-64 (VWAERDSDDERP). 3 disordered regions span residues 1–21 (MSLS…DDER), 53–72 (VWAE…KRAR), and 85–133 (LKKG…KGFA). The tract at residues 1-50 (MSLSHLYRDGEGRIDDDDDERENFEITDWDLQNEFNPNRQRHWQTKEEAT) is required for interaction with DHX15. Serine 2, serine 59, and serine 98 each carry phosphoserine. The span at 91–102 (EEAELEDSDDEE) shows a compositional bias: acidic residues. The segment covering 103–116 (KPVKQDDFPKDFGP) has biased composition (basic and acidic residues). Serine 144 carries the phosphoserine modification. Positions 149 to 195 (TKGIGQKLLQKMGYVPGRGLGKNAQGIINPIEAKQRKGKGAVGAYGS) constitute a G-patch domain. The segment at 179 to 236 (IEAKQRKGKGAVGAYGSERTTQSMQDFPVVDSEEEAEEEFQKELSQWRKDPSGSKKKP) is disordered. A Phosphoserine modification is found at serine 210. Residues 217–231 (EFQKELSQWRKDPSG) are compositionally biased toward basic and acidic residues. The Nuclear localization signal signature appears at 700 to 705 (VKDKFN). A required for nuclear speckle localization region spans residues 710–734 (IMNRAVSSNVGAYMQPGARENIAYL).

This sequence belongs to the TFP11/STIP family. Identified in the spliceosome C complex. Found in the Intron Large (IL) complex, a post-mRNA release spliceosomal complex containing the excised intron, U2, U5 and U6 snRNPs, and splicing factors. Interacts with TUFT1. Interacts with DHX15; indicative for a recruitment of DHX15 to the IL complex. Interacts with GCFC2.

It is found in the cytoplasm. The protein resides in the nucleus. Its function is as follows. Involved in pre-mRNA splicing, specifically in spliceosome disassembly during late-stage splicing events. Intron turnover seems to proceed through reactions in two lariat-intron associated complexes termed Intron Large (IL) and Intron Small (IS). In cooperation with DHX15 seems to mediate the transition of the U2, U5 and U6 snRNP-containing IL complex to the snRNP-free IS complex leading to efficient debranching and turnover of excised introns. May play a role in the differentiation of ameloblasts and odontoblasts or in the forming of the enamel extracellular matrix. The polypeptide is Tuftelin-interacting protein 11 (TFIP11) (Pan troglodytes (Chimpanzee)).